A 371-amino-acid polypeptide reads, in one-letter code: Rab9 effector protein with kelch motifs (371 aa).

Kelch repeat units follow at residues 47–93 (RVLL…FLSA), 98–144 (RLWV…TSSA), 149–201 (CLYV…AVGT), 202–251 (KLFI…VFKD), 252–301 (HLYI…VIPW), and 348–371 (LLLI…SLIE).

Its function is as follows. Rab9 effector required for endosome to trans-Golgi network (TGN) transport. This Gallus gallus (Chicken) protein is Rab9 effector protein with kelch motifs (RABEPK).